Consider the following 999-residue polypeptide: Lysosomal alpha-mannosidase (999 aa).

Residues 1–25 are disordered; sequence MVGDARPSGVRAGGCRGAVGSRTSS. The first 50 residues, 1-50, serve as a signal peptide directing secretion; that stretch reads MVGDARPSGVRAGGCRGAVGSRTSSRALRPPLPPLSSLFVLFLAAPCAWA. Positions 73 and 75 each coordinate Zn(2+). Residue asparagine 134 is glycosylated (N-linked (GlcNAc...) asparagine). Aspartate 197 contributes to the Zn(2+) binding site. Aspartate 197 (nucleophile) is an active-site residue. A disulfide bridge links cysteine 269 with cysteine 274. Asparagine 369 is a glycosylation site (N-linked (GlcNAc...) asparagine). Histidine 448 is a Zn(2+) binding site. Cysteine 495 and cysteine 503 are joined by a disulfide. An N-linked (GlcNAc...) asparagine glycan is attached at asparagine 499. A propeptide spanning residues 591–621 is cleaved from the precursor; that stretch reads SRDLVIQNEYLRARFDPNTGLLMELENLEQN. N-linked (GlcNAc...) asparagine glycosylation is found at asparagine 634, asparagine 640, asparagine 681, asparagine 755, and asparagine 919.

It belongs to the glycosyl hydrolase 38 family. Homodimer. Zn(2+) serves as cofactor. Processed into 5 peptides of 35/38 kDa (A), 11/13 kDa (B) and 22 kDa (C), 38 kDa (D) and 13/15 kDa (E). The A, B and C peptides are disulfide-linked into a 67 kDa complex. Post-translationally, heavily glycosylated. Some sugar chains are of the high-mannose type.

It localises to the lysosome. The catalysed reaction is Hydrolysis of terminal, non-reducing alpha-D-mannose residues in alpha-D-mannosides.. Functionally, necessary for the catabolism of N-linked carbohydrates released during glycoprotein turnover. The chain is Lysosomal alpha-mannosidase (MAN2B1) from Bos taurus (Bovine).